A 249-amino-acid polypeptide reads, in one-letter code: Enolase-phosphatase E1 (249 aa).

Asp-15 and Glu-17 together coordinate Mg(2+). Substrate-binding positions include 146–147 (SS) and Lys-180. Residue Asp-205 coordinates Mg(2+).

This sequence belongs to the HAD-like hydrolase superfamily. MasA/MtnC family. Monomer. Mg(2+) serves as cofactor.

The protein resides in the cytoplasm. The protein localises to the nucleus. It catalyses the reaction 5-methylsulfanyl-2,3-dioxopentyl phosphate + H2O = 1,2-dihydroxy-5-(methylsulfanyl)pent-1-en-3-one + phosphate. The protein operates within amino-acid biosynthesis; L-methionine biosynthesis via salvage pathway; L-methionine from S-methyl-5-thio-alpha-D-ribose 1-phosphate: step 3/6. Its pathway is amino-acid biosynthesis; L-methionine biosynthesis via salvage pathway; L-methionine from S-methyl-5-thio-alpha-D-ribose 1-phosphate: step 4/6. In terms of biological role, bifunctional enzyme that catalyzes the enolization of 2,3-diketo-5-methylthiopentyl-1-phosphate (DK-MTP-1-P) into the intermediate 2-hydroxy-3-keto-5-methylthiopentenyl-1-phosphate (HK-MTPenyl-1-P), which is then dephosphorylated to form the acireductone 1,2-dihydroxy-3-keto-5-methylthiopentene (DHK-MTPene). This Caenorhabditis briggsae protein is Enolase-phosphatase E1.